The chain runs to 270 residues: Small ribosomal subunit protein uS3 (270 aa).

Residues 38–106 (IRQMLTRGME…QVQLNILEVK (69 aa)) enclose the KH type-2 domain. Positions 212–270 (EREAAQAAQRAAGPQRRERPGRRRRGGGGGGGQQQQQAEKATAQATEAAKAAKSGNEGS) are disordered. Low complexity-rich tracts occupy residues 216–225 (AQAAQRAAGP) and 245–263 (QQQQ…AKAA).

Belongs to the universal ribosomal protein uS3 family. In terms of assembly, part of the 30S ribosomal subunit. Forms a tight complex with proteins S10 and S14.

Binds the lower part of the 30S subunit head. Binds mRNA in the 70S ribosome, positioning it for translation. The polypeptide is Small ribosomal subunit protein uS3 (Thermobifida fusca (strain YX)).